A 297-amino-acid polypeptide reads, in one-letter code: HTH-type transcriptional regulator ArgP (297 aa).

The HTH lysR-type domain occupies 4-60 (PDYRTLQALDAVIRERGFERAAQKLCITQSAVSQRIKQLENLFGQPLLVRTVPPRPT). Positions 21–40 (FERAAQKLCITQSAVSQRIK) form a DNA-binding region, H-T-H motif.

Belongs to the LysR transcriptional regulatory family. As to quaternary structure, homodimer.

Functionally, controls the transcription of genes involved in arginine and lysine metabolism. The polypeptide is HTH-type transcriptional regulator ArgP (Yersinia enterocolitica serotype O:8 / biotype 1B (strain NCTC 13174 / 8081)).